The sequence spans 932 residues: Protein translocase subunit SecA, chloroplastic (932 aa).

Residue 95-102 participates in ATP binding; that stretch reads MRTGEGKT. Over residues 632 to 641 the composition is skewed to basic and acidic residues; it reads HESRRVDNQL. The tract at residues 632–653 is disordered; the sequence is HESRRVDNQLRGRSGRQGDPGS.

It belongs to the SecA family.

The protein localises to the plastid. The protein resides in the chloroplast stroma. It localises to the chloroplast thylakoid membrane. It catalyses the reaction ATP + H2O + chloroplast-proteinSide 1 = ADP + phosphate + chloroplast-proteinSide 2.. Its function is as follows. Has a central role in coupling the hydrolysis of ATP to the transfer of proteins across the thylakoid membrane. This chain is Protein translocase subunit SecA, chloroplastic, found in Ostreococcus lucimarinus (strain CCE9901).